The chain runs to 152 residues: Regulatory protein RecX (152 aa).

The protein belongs to the RecX family.

It is found in the cytoplasm. Functionally, modulates RecA activity. This chain is Regulatory protein RecX, found in Haemophilus influenzae (strain PittGG).